Here is a 242-residue protein sequence, read N- to C-terminus: 1-(5-phosphoribosyl)-5-[(5-phosphoribosylamino)methylideneamino] imidazole-4-carboxamide isomerase (242 aa).

Catalysis depends on Asp8, which acts as the Proton acceptor. The Proton donor role is filled by Asp129.

The protein belongs to the HisA/HisF family.

The protein resides in the cytoplasm. It carries out the reaction 1-(5-phospho-beta-D-ribosyl)-5-[(5-phospho-beta-D-ribosylamino)methylideneamino]imidazole-4-carboxamide = 5-[(5-phospho-1-deoxy-D-ribulos-1-ylimino)methylamino]-1-(5-phospho-beta-D-ribosyl)imidazole-4-carboxamide. It participates in amino-acid biosynthesis; L-histidine biosynthesis; L-histidine from 5-phospho-alpha-D-ribose 1-diphosphate: step 4/9. This Beijerinckia indica subsp. indica (strain ATCC 9039 / DSM 1715 / NCIMB 8712) protein is 1-(5-phosphoribosyl)-5-[(5-phosphoribosylamino)methylideneamino] imidazole-4-carboxamide isomerase.